The primary structure comprises 339 residues: Dihydroorotate dehydrogenase (quinone) (339 aa).

FMN contacts are provided by residues 62-66 (AGMDK) and Thr-86. Lys-66 serves as a coordination point for substrate. Position 111–115 (111–115 (NRMGF)) interacts with substrate. FMN contacts are provided by Asn-139 and Asn-172. Asn-172 provides a ligand contact to substrate. Catalysis depends on Ser-175, which acts as the Nucleophile. Residue Asn-177 coordinates substrate. Lys-217 and Thr-245 together coordinate FMN. Residue 246-247 (NT) coordinates substrate. Residues Gly-268, Gly-297, and 318–319 (YS) contribute to the FMN site.

This sequence belongs to the dihydroorotate dehydrogenase family. Type 2 subfamily. In terms of assembly, monomer. The cofactor is FMN.

The protein localises to the cell membrane. The catalysed reaction is (S)-dihydroorotate + a quinone = orotate + a quinol. Its pathway is pyrimidine metabolism; UMP biosynthesis via de novo pathway; orotate from (S)-dihydroorotate (quinone route): step 1/1. Its function is as follows. Catalyzes the conversion of dihydroorotate to orotate with quinone as electron acceptor. This chain is Dihydroorotate dehydrogenase (quinone), found in Shewanella sediminis (strain HAW-EB3).